A 201-amino-acid chain; its full sequence is 3-isopropylmalate dehydratase small subunit (201 aa).

Belongs to the LeuD family. LeuD type 1 subfamily. As to quaternary structure, heterodimer of LeuC and LeuD.

The catalysed reaction is (2R,3S)-3-isopropylmalate = (2S)-2-isopropylmalate. It functions in the pathway amino-acid biosynthesis; L-leucine biosynthesis; L-leucine from 3-methyl-2-oxobutanoate: step 2/4. Catalyzes the isomerization between 2-isopropylmalate and 3-isopropylmalate, via the formation of 2-isopropylmaleate. This Cytophaga hutchinsonii (strain ATCC 33406 / DSM 1761 / CIP 103989 / NBRC 15051 / NCIMB 9469 / D465) protein is 3-isopropylmalate dehydratase small subunit.